A 34-amino-acid chain; its full sequence is MENNNRFMPHIRRTTHIMMFAHRNSFDFHFFNAR.

The Ornithine recognition loop signature appears at 10–16; the sequence is HIRRTTH. An L-ornithine-binding site is contributed by Arg-13.

Belongs to the speF operon leader peptide family. Binds ornithine in stalled 70S ribosomes, blocking the upper two-thirds of the exit tunnel. Contacts 23S rRNA and ribosomal proteins L4 and L22.

Its function is as follows. A small protein (arrest peptide) encoded upstream of inducible ornithine carboxylase gene (speF) that controls expression of downstream genes (speF and potE) by transcriptional and translational attenuation. Its expression controls transcription and translation of downstream SpeF; translation pausing at low Arg levels on this mRNA prevents premature Rho-dependent transcription termination of speF and also enhances SprF translation by preventing sequestration of its ribosome-binding site. In the presence of high Arg levels translation of this protein allows the formation of an speF mRNA structure that is degraded by RNase G. The chain is Leader peptide SpeFL from Salmonella typhimurium (strain SL1344).